Here is a 315-residue protein sequence, read N- to C-terminus: Ribose-phosphate pyrophosphokinase (315 aa).

ATP contacts are provided by residues 37 to 39 (DGE) and 96 to 97 (RQ). Mg(2+)-binding residues include His-131 and Asp-171. Lys-195 is an active-site residue. D-ribose 5-phosphate is bound by residues Arg-197, Asp-221, and 225–229 (DTGGT).

The protein belongs to the ribose-phosphate pyrophosphokinase family. Class I subfamily. In terms of assembly, homohexamer. It depends on Mg(2+) as a cofactor.

The protein localises to the cytoplasm. The catalysed reaction is D-ribose 5-phosphate + ATP = 5-phospho-alpha-D-ribose 1-diphosphate + AMP + H(+). It functions in the pathway metabolic intermediate biosynthesis; 5-phospho-alpha-D-ribose 1-diphosphate biosynthesis; 5-phospho-alpha-D-ribose 1-diphosphate from D-ribose 5-phosphate (route I): step 1/1. Functionally, involved in the biosynthesis of the central metabolite phospho-alpha-D-ribosyl-1-pyrophosphate (PRPP) via the transfer of pyrophosphoryl group from ATP to 1-hydroxyl of ribose-5-phosphate (Rib-5-P). The chain is Ribose-phosphate pyrophosphokinase from Haemophilus influenzae (strain ATCC 51907 / DSM 11121 / KW20 / Rd).